We begin with the raw amino-acid sequence, 49 residues long: Large ribosomal subunit protein bL33A (49 aa).

Belongs to the bacterial ribosomal protein bL33 family.

This chain is Large ribosomal subunit protein bL33A, found in Levilactobacillus brevis (strain ATCC 367 / BCRC 12310 / CIP 105137 / JCM 1170 / LMG 11437 / NCIMB 947 / NCTC 947) (Lactobacillus brevis).